Reading from the N-terminus, the 329-residue chain is Sulfate-binding protein (329 aa).

A signal peptide spans Met-1–Ala-19.

It belongs to the prokaryotic sulfate-binding protein family.

The protein resides in the periplasm. Functionally, this protein specifically binds sulfate and is involved in its transmembrane transport. The polypeptide is Sulfate-binding protein (sbp) (Escherichia coli (strain K12)).